The primary structure comprises 258 residues: Serine/arginine-rich splicing factor x16 (258 aa).

The region spanning 8-81 (RKVYVGDLGN…RRARVELSTG (74 aa)) is the RRM domain. 2 disordered regions span residues 81–113 (GKYA…GGRG) and 130–258 (CRER…VSRD). Residues 86-103 (SGGGGGGGGGGGGGGGLG) show a composition bias toward gly residues. Basic and acidic residues predominate over residues 104–113 (GRDRGGGGRG). Residues 116 to 132 (KCYECGGRGHFARHCRE) form a CCHC-type zinc finger. Composition is skewed to basic residues over residues 130–141 (CRERKARQRRRS) and 149–166 (STSR…RSRS). 2 stretches are compositionally biased toward basic and acidic residues: residues 180-197 (NGRD…HERN) and 210-221 (RRYEDEDDDRVR). Composition is skewed to low complexity over residues 231 to 240 (RSASPAVRRG) and 249 to 258 (SSASRSVSRD).

In terms of assembly, interacts (via Arg/Ser-rich region) with Alsin2/CG7564, Rbp1 and Doa (via N-terminus). Post-translationally, highly phosphorylated. May be phosphorylated by the serine/threonine-protein kinase Doa.

Its subcellular location is the nucleus. Functionally, serine/arginine-rich splicing factor (SR protein) involved in differential exon usage during RNA transcript processing, probably by binding exonic splicing enhancer elements and recruiting components of the splicing machinery. Binds RNA stem-loop structures with consensus sequence 5'-CCGUNUNKNW-3'. Regulator of genes involved in lipid and carbohydrate metabolism, the immune response and the response to xenobiotics. The sequence is that of Serine/arginine-rich splicing factor x16 from Drosophila melanogaster (Fruit fly).